An 82-amino-acid polypeptide reads, in one-letter code: MKAGIHPDYRTVVFHDTSADVYYRTGSTIKTDRTIELEGTSYPYVTIDVSSASHPYYTGKQKEYSKEGSTARFQQRFGNFFK.

Belongs to the bacterial ribosomal protein bL31 family. Type B subfamily. As to quaternary structure, part of the 50S ribosomal subunit.

The sequence is that of Large ribosomal subunit protein bL31B from Pectobacterium carotovorum subsp. carotovorum (strain PC1).